Reading from the N-terminus, the 182-residue chain is Thioredoxin X, chloroplastic (182 aa).

A chloroplast-targeting transit peptide spans 1–67 (MDSIVSSSTI…TRKSSSSVIR (67 aa)). One can recognise a Thioredoxin domain in the interval 68 to 177 (CGGIKEIGES…LKEYIDGLLN (110 aa)). Active-site nucleophile residues include cysteine 99 and cysteine 102. Cysteine 99 and cysteine 102 are oxidised to a cystine.

Belongs to the thioredoxin family. As to expression, predominantly expressed in leaves.

The protein localises to the plastid. The protein resides in the chloroplast stroma. Its function is as follows. Probable thiol-disulfide oxidoreductase that may participate in various redox reactions. In Arabidopsis thaliana (Mouse-ear cress), this protein is Thioredoxin X, chloroplastic (ATHX).